A 110-amino-acid chain; its full sequence is UPF0339 protein YegP (110 aa).

Tandem repeats lie at residues 10 to 58 (SSDN…RYEK) and 61 to 109 (ASNG…VKDN).

The protein belongs to the UPF0339 family. Duplicated subfamily.

The sequence is that of UPF0339 protein YegP (yegP) from Shigella flexneri.